The chain runs to 66 residues: Small ribosomal subunit protein eS30 (66 aa).

The interval 1–35 (MGKVHGGLNRAGKVRNATPKKDKEEKRKPKVGRAK) is disordered.

This sequence belongs to the eukaryotic ribosomal protein eS30 family.

This chain is Small ribosomal subunit protein eS30 (rps30-1), found in Dictyostelium discoideum (Social amoeba).